A 221-amino-acid polypeptide reads, in one-letter code: Woronin body major protein (221 aa).

The short motif at 219–221 (SRL) is the Microbody targeting signal element.

Belongs to the eIF-5A family. Hex1 subfamily. As to quaternary structure, forms oligomers. Self-assembles into hexagonal rods.

Its subcellular location is the cell septum. Its function is as follows. Major component of Woronin bodies, fungal-specific organelles that occlude septal pores in order to separate intact from damaged compartments. Hex1 binds directly or indirectly to the Woronin body tether that in turn is anchored at the rim of the septal pore. The chain is Woronin body major protein from Emericella nidulans (strain FGSC A4 / ATCC 38163 / CBS 112.46 / NRRL 194 / M139) (Aspergillus nidulans).